Reading from the N-terminus, the 464-residue chain is Argininosuccinate lyase (464 aa).

It belongs to the lyase 1 family. Argininosuccinate lyase subfamily.

Its subcellular location is the cytoplasm. The enzyme catalyses 2-(N(omega)-L-arginino)succinate = fumarate + L-arginine. Its pathway is amino-acid biosynthesis; L-arginine biosynthesis; L-arginine from L-ornithine and carbamoyl phosphate: step 3/3. The chain is Argininosuccinate lyase from Pseudomonas putida (strain GB-1).